Reading from the N-terminus, the 168-residue chain is Desumoylating isopeptidase 1 (168 aa).

The region spanning 7 to 149 (YPVKLYVYDL…FGQALRPFLD (143 aa)) is the PPPDE domain. His38 is an active-site residue. The Nuclear export signal 1 signature appears at 83–91 (IFLEYLSSL). Residue Cys108 is part of the active site. A Nuclear export signal 2 motif is present at residues 139 to 153 (PFGQALRPFLDSIQI).

Belongs to the DeSI family. Homodimer. Interacts with UBQLN4; leading to the export of UBQLN4 from the nucleus.

It localises to the cytoplasm. The protein localises to the nucleus. It catalyses the reaction S-hexadecanoyl-L-cysteinyl-[protein] + H2O = L-cysteinyl-[protein] + hexadecanoate + H(+). In terms of biological role, protease which deconjugates SUMO1, SUMO2 and SUMO3 from some substrate proteins. Has isopeptidase but not SUMO-processing activity. Desumoylates ZBTB46. Collaborates with UBQLN4 in the export of ubiquitinated proteins from the nucleus to the cytoplasm. Exhibits palmitoyl protein thioesterase (S-depalmitoylation) activity towards synthetic substrates 4-methylumbelliferyl-6-S-palmitoyl-beta-D-glucopyranoside and S-depalmitoylation probe 5 (DPP-5). This chain is Desumoylating isopeptidase 1 (Desi1), found in Rattus norvegicus (Rat).